The chain runs to 351 residues: Outer membrane porin PhoE (351 aa).

An N-terminal signal peptide occupies residues 1-21 (MKKSTLALVVMGITASASVQA).

Belongs to the Gram-negative porin family. Homotrimer.

It localises to the cell outer membrane. In terms of biological role, uptake of inorganic phosphate, phosphorylated compounds, and some other negatively charged solutes. In Citrobacter freundii, this protein is Outer membrane porin PhoE (phoE).